Here is a 150-residue protein sequence, read N- to C-terminus: 3-dehydroquinate dehydratase (150 aa).

Catalysis depends on Y26, which acts as the Proton acceptor. N77, H83, and D90 together coordinate substrate. H103 (proton donor) is an active-site residue. Residues 104-105 (LS) and R114 each bind substrate.

Belongs to the type-II 3-dehydroquinase family. As to quaternary structure, homododecamer.

It carries out the reaction 3-dehydroquinate = 3-dehydroshikimate + H2O. Its pathway is metabolic intermediate biosynthesis; chorismate biosynthesis; chorismate from D-erythrose 4-phosphate and phosphoenolpyruvate: step 3/7. In terms of biological role, catalyzes a trans-dehydration via an enolate intermediate. In Pseudoalteromonas translucida (strain TAC 125), this protein is 3-dehydroquinate dehydratase.